A 369-amino-acid polypeptide reads, in one-letter code: 3,7-dimethylxanthine N-methyltransferase TCS1 (369 aa).

Y24 contacts S-adenosyl-L-homocysteine. T31 contacts caffeine. S-adenosyl-L-homocysteine-binding residues include C66, N71, D103, L104, S138, and F139. Y156, H159, and W160 together coordinate caffeine. Mg(2+) is bound at residue N177. R225 contacts caffeine. The Mg(2+) site is built by D263, F265, and N266. F321 provides a ligand contact to caffeine.

It belongs to the methyltransferase superfamily. Type-7 methyltransferase family. Requires Mg(2+) as cofactor. Expressed in young leaves and flowers.

It carries out the reaction 7-methylxanthine + S-adenosyl-L-methionine = theobromine + S-adenosyl-L-homocysteine + H(+). It catalyses the reaction theobromine + S-adenosyl-L-methionine = caffeine + S-adenosyl-L-homocysteine + H(+). The catalysed reaction is 1,7-dimethylxanthine + S-adenosyl-L-methionine = caffeine + S-adenosyl-L-homocysteine + H(+). Its pathway is alkaloid biosynthesis. Involved in the biosynthesis of caffeine. Catalyzes the conversion of 7-methylxanthine (7mX) to theobromine and of theobromine to caffeine. Has 3-N- and 1-N-methylation activity. The protein is 3,7-dimethylxanthine N-methyltransferase TCS1 of Camellia sinensis (Tea plant).